Reading from the N-terminus, the 109-residue chain is Thioredoxin (109 aa).

Residues 2–109 (ETLLWKDARE…LVEKIKELFK (108 aa)) enclose the Thioredoxin domain. Cys27 and Cys30 are joined by a disulfide.

Belongs to the thioredoxin family.

Its function is as follows. Participates in various redox reactions through the reversible oxidation of its active center dithiol to a disulfide and catalyzes dithiol-disulfide exchange reactions. In Mycoplasmopsis pulmonis (strain UAB CTIP) (Mycoplasma pulmonis), this protein is Thioredoxin (trxA).